The primary structure comprises 126 residues: Small ribosomal subunit protein uS12 (126 aa).

Residues 1 to 28 (MPTINQLVRKGRQSETTKSKSPALQDCP) form a disordered region. 3-methylthioaspartic acid is present on aspartate 89. The disordered stretch occupies residues 103-126 (DTQGVKDRKQARSKYGAKRAKAAK). The span at 113–126 (ARSKYGAKRAKAAK) shows a compositional bias: basic residues.

Belongs to the universal ribosomal protein uS12 family. Part of the 30S ribosomal subunit. Contacts proteins S8 and S17. May interact with IF1 in the 30S initiation complex.

Functionally, with S4 and S5 plays an important role in translational accuracy. Interacts with and stabilizes bases of the 16S rRNA that are involved in tRNA selection in the A site and with the mRNA backbone. Located at the interface of the 30S and 50S subunits, it traverses the body of the 30S subunit contacting proteins on the other side and probably holding the rRNA structure together. The combined cluster of proteins S8, S12 and S17 appears to hold together the shoulder and platform of the 30S subunit. The protein is Small ribosomal subunit protein uS12 of Burkholderia orbicola (strain MC0-3).